A 387-amino-acid polypeptide reads, in one-letter code: Putative transposase y4pF/y4sB (387 aa).

Belongs to the transposase 20 family.

The chain is Putative transposase y4pF/y4sB from Sinorhizobium fredii (strain NBRC 101917 / NGR234).